Consider the following 352-residue polypeptide: Uroporphyrinogen decarboxylase (352 aa).

Substrate is bound by residues 26–30, F45, D76, Y153, S208, and H323; that span reads RQAGR.

It belongs to the uroporphyrinogen decarboxylase family. In terms of assembly, homodimer.

It is found in the cytoplasm. The enzyme catalyses uroporphyrinogen III + 4 H(+) = coproporphyrinogen III + 4 CO2. It functions in the pathway porphyrin-containing compound metabolism; protoporphyrin-IX biosynthesis; coproporphyrinogen-III from 5-aminolevulinate: step 4/4. Its function is as follows. Catalyzes the decarboxylation of four acetate groups of uroporphyrinogen-III to yield coproporphyrinogen-III. This Prochlorococcus marinus (strain MIT 9313) protein is Uroporphyrinogen decarboxylase.